The primary structure comprises 457 residues: Chromosomal replication initiator protein DnaA (457 aa).

A domain I, interacts with DnaA modulators region spans residues 1 to 90 (MDTNNNIEKE…HSVDVRIEVA (90 aa)). The domain II stretch occupies residues 91–112 (PKIQINAQSNINYKAIKTSVKD). Residues 113-323 (SYTFENFVVG…GAIIKISVNA (211 aa)) are domain III, AAA+ region. The ATP site is built by Gly153, Gly155, Lys156, and Thr157. The segment at 324–457 (NLMNASIDLN…DKKTAFNSSE (134 aa)) is domain IV, binds dsDNA.

This sequence belongs to the DnaA family. Oligomerizes as a right-handed, spiral filament on DNA at oriC. Interacts via domain I with HobA. In a crystal with domains I and II of DnaA HobA forms tetramers with DnaA fragments bound at the dimer interface of the tetramer.

It localises to the cytoplasm. Its subcellular location is the cell inner membrane. Its function is as follows. Plays an essential role in the initiation and regulation of chromosomal replication. ATP-DnaA binds to the origin of replication (oriC) to initiate formation of the DNA replication initiation complex once per cell cycle. Binds the DnaA box (a 9 base pair repeat at the origin) and separates the double-stranded (ds)DNA. Forms a right-handed helical filament on oriC DNA; dsDNA binds to the exterior of the filament while single-stranded (ss)DNA is stabiized in the filament's interior. The ATP-DnaA-oriC complex binds and stabilizes one strand of the AT-rich DNA unwinding element (DUE), permitting loading of DNA polymerase. After initiation quickly degrades to an ADP-DnaA complex that is not apt for DNA replication. Binds acidic phospholipids. The DnaA box is 5'-TTATC[CA]A[CA]A-3' in this bacterium cycle. Multiple discrete DnaA-oriC complexes can be seen as DnaA levels increase. Binding of DnaA to oriC is increased by HobA; some chi-type structures can be seen by electron microscopy. Strand separation requires the DnaA boxes and adjacent DnaA-trio motifs but works equally well with ADP or ATP. The polypeptide is Chromosomal replication initiator protein DnaA (Helicobacter pylori (strain ATCC 700392 / 26695) (Campylobacter pylori)).